A 221-amino-acid polypeptide reads, in one-letter code: F-box protein At1g55000 (221 aa).

The 40-residue stretch at D7 to T46 folds into the F-box domain. The LysM domain occupies I74–I118.

As to quaternary structure, part of a SCF (ASK-cullin-F-box) protein ligase complex. Interacts with SKP1A/ASK1, SKP1B/ASK2, ASK4, ASK11 and ASK13.

Its pathway is protein modification; protein ubiquitination. In terms of biological role, component of SCF(ASK-cullin-F-box) E3 ubiquitin ligase complexes, which may mediate the ubiquitination and subsequent proteasomal degradation of target proteins. In Arabidopsis thaliana (Mouse-ear cress), this protein is F-box protein At1g55000.